The primary structure comprises 875 residues: Alanine--tRNA ligase (875 aa).

4 residues coordinate Zn(2+): His564, His568, Cys666, and His670.

The protein belongs to the class-II aminoacyl-tRNA synthetase family. As to quaternary structure, homotetramer. Zn(2+) is required as a cofactor.

It is found in the cytoplasm. It catalyses the reaction tRNA(Ala) + L-alanine + ATP = L-alanyl-tRNA(Ala) + AMP + diphosphate. Functionally, catalyzes the attachment of alanine to tRNA(Ala) in a two-step reaction: alanine is first activated by ATP to form Ala-AMP and then transferred to the acceptor end of tRNA(Ala). Also edits incorrectly charged Ser-tRNA(Ala) and Gly-tRNA(Ala) via its editing domain. The protein is Alanine--tRNA ligase of Serratia proteamaculans (strain 568).